A 113-amino-acid polypeptide reads, in one-letter code: Death-associated protein-like 1.S (113 aa).

The segment at 1–53 (MTKELKVQSSPQALKAGHLPAVKAGGMRVSKKQGNDENSAPEKNAKKTLQEKP) is disordered.

This sequence belongs to the DAP-DAPL1 family. Associates with ribosomes; preventing translation. Interacts with eiF5a (eif5a and eif5a2); preventing translation.

In terms of biological role, ribosome-binding protein that promotes ribosome hibernation, a process during which ribosomes are stabilized in an inactive state and preserved from proteasomal degradation. Acts via its association with eiF5a (eif5a and eif5a2) at the polypeptide exit tunnel of the ribosome, preventing mRNA translation. Plays a key role in ribosome hibernation in the mature egg by preventing mRNA translation, leading to ribosome inactivation. Ribosomes, which are produced in large quantities during oogenesis, are stored and translationally repressed in the egg and early embryo. The protein is Death-associated protein-like 1.S (dapl1.S) of Xenopus laevis (African clawed frog).